A 505-amino-acid chain; its full sequence is Maturase K (505 aa).

Belongs to the intron maturase 2 family. MatK subfamily.

It localises to the plastid. The protein resides in the chloroplast. Its function is as follows. Usually encoded in the trnK tRNA gene intron. Probably assists in splicing its own and other chloroplast group II introns. The chain is Maturase K from Coffea arabica (Arabian coffee).